We begin with the raw amino-acid sequence, 324 residues long: Cytochrome c biogenesis protein CcsA (324 aa).

8 consecutive transmembrane segments (helical) span residues 15-35 (FSIV…DEII), 44-64 (GMIA…IYSG), 71-91 (LYES…VPYF), 98-118 (LSTI…SGLL), 143-163 (MILG…LLVL), 228-248 (VISL…VWAN), 255-275 (WNWD…AVYL), and 289-309 (AIVA…VNLL).

Belongs to the CcmF/CycK/Ccl1/NrfE/CcsA family. As to quaternary structure, may interact with Ccs1.

It localises to the plastid. The protein resides in the chloroplast thylakoid membrane. Functionally, required during biogenesis of c-type cytochromes (cytochrome c6 and cytochrome f) at the step of heme attachment. The sequence is that of Cytochrome c biogenesis protein CcsA from Daucus carota (Wild carrot).